The chain runs to 300 residues: NAD kinase (300 aa).

Catalysis depends on Asp75, which acts as the Proton acceptor. Residues 75–76, 149–150, Arg177, Asp179, 190–195, Ala214, and Gln248 each bind NAD(+); these read DG, ND, and TAYALS.

Belongs to the NAD kinase family. The cofactor is a divalent metal cation.

The protein resides in the cytoplasm. It catalyses the reaction NAD(+) + ATP = ADP + NADP(+) + H(+). In terms of biological role, involved in the regulation of the intracellular balance of NAD and NADP, and is a key enzyme in the biosynthesis of NADP. Catalyzes specifically the phosphorylation on 2'-hydroxyl of the adenosine moiety of NAD to yield NADP. The chain is NAD kinase from Burkholderia ambifaria (strain MC40-6).